We begin with the raw amino-acid sequence, 148 residues long: Large ribosomal subunit protein uL15 (148 aa).

Basic and acidic residues predominate over residues 1-40; sequence MADILQMHDLKPAPGANKDRIRVGRGEGSKGKTSGRGDKG. The segment at 1 to 47 is disordered; it reads MADILQMHDLKPAPGANKDRIRVGRGEGSKGKTSGRGDKGTKKRYQV.

It belongs to the universal ribosomal protein uL15 family. In terms of assembly, part of the 50S ribosomal subunit.

Binds to the 23S rRNA. This Bifidobacterium adolescentis (strain ATCC 15703 / DSM 20083 / NCTC 11814 / E194a) protein is Large ribosomal subunit protein uL15.